The following is a 606-amino-acid chain: Dihydroxy-acid dehydratase ilvC, mitochondrial (606 aa).

Residue Cys-84 participates in [2Fe-2S] cluster binding. A Mg(2+)-binding site is contributed by Asp-116. Cys-157 serves as a coordination point for [2Fe-2S] cluster. Position 158 (Asp-158) interacts with Mg(2+). Cys-232 contacts [2Fe-2S] cluster. Position 485 (Glu-485) interacts with Mg(2+). Residue Ser-511 is the Proton acceptor of the active site.

This sequence belongs to the IlvD/Edd family. Requires [2Fe-2S] cluster as cofactor. It depends on Mg(2+) as a cofactor.

The protein localises to the mitochondrion. It catalyses the reaction (2R)-2,3-dihydroxy-3-methylbutanoate = 3-methyl-2-oxobutanoate + H2O. The catalysed reaction is (2R,3R)-2,3-dihydroxy-3-methylpentanoate = (S)-3-methyl-2-oxopentanoate + H2O. It participates in amino-acid biosynthesis; L-isoleucine biosynthesis; L-isoleucine from 2-oxobutanoate: step 3/4. It functions in the pathway amino-acid biosynthesis; L-valine biosynthesis; L-valine from pyruvate: step 3/4. With respect to regulation, DHAD activity is inhibited in dose-dependent manner by 2-hydroxy-3-methylbutyric acid with an IC(50) of about 8 mM. Dihydroxyacid dehydratase that catalyzes the third step in the common pathway leading to biosynthesis of branched-chain amino acids. Catalyzes the dehydration of (2R,3R)-2,3-dihydroxy-3-methylpentanoate (2,3-dihydroxy-3-methylvalerate) into 2-oxo-3-methylpentanoate (2-oxo-3-methylvalerate) and of (2R)-2,3-dihydroxy-3-methylbutanoate (2,3-dihydroxyisovalerate) into 2-oxo-3-methylbutanoate (2-oxoisovalerate), the penultimate precursor to L-isoleucine and L-valine, respectively. IlvC and the branched-chain amino acid biosynthesis are crucial for virulence and may be a potential target to develop antifungal agents. The sequence is that of Dihydroxy-acid dehydratase ilvC, mitochondrial from Aspergillus fumigatus (strain ATCC MYA-4609 / CBS 101355 / FGSC A1100 / Af293) (Neosartorya fumigata).